The sequence spans 384 residues: 5-cytosine rRNA methyltransferase NSUN4 (384 aa).

The N-terminal 25 residues, 1-25, are a transit peptide targeting the mitochondrion; it reads MAALTLRGVRELLKRVDLATVPRRH. S-adenosyl-L-methionine is bound by residues G185, G186, K187, and D204. Phosphoserine is present on S206. Residues R209, D237, G238, and D255 each contribute to the S-adenosyl-L-methionine site. Residue C310 is the Nucleophile of the active site.

It belongs to the class I-like SAM-binding methyltransferase superfamily. RsmB/NOP family. As to quaternary structure, heterodimer with MTERFD2/MTERF4; this interaction seems to be required for NSUN4 recruitment to the mitochondrial large ribosomal subunit.

It is found in the mitochondrion. The catalysed reaction is a cytidine in rRNA + S-adenosyl-L-methionine = a 5-methylcytidine in rRNA + S-adenosyl-L-homocysteine + H(+). It catalyses the reaction a cytidine in mRNA + S-adenosyl-L-methionine = a 5-methylcytidine in mRNA + S-adenosyl-L-homocysteine + H(+). Its function is as follows. Mitochondrial RNA cytosine C(5)-methyltransferase that methylates cytosine to 5-methylcytosine (m5C) in various RNAs, such as rRNAs, mRNAs and some long non-coding RNAs (lncRNAs). Involved in mitochondrial ribosome small subunit (SSU) maturation by catalyzing methylation of mitochondrial 12S rRNA; the function is independent of MTERFD2/MTERF4 and assembled mitochondrial ribosome large subunit (LSU). Targeted to LSU by MTERFD2/MTERF4 and probably is involved in a final step in ribosome biogenesis to ensure that SSU and LSU are assembled. In vitro can methylate 16S rRNA of the LSU; the methylation is enhanced by MTERFD/MTERF4. Also acts as a regulator of innate immunity by marking double-stranded mitochondrial RNAs(mt-dsRNAs) generated in response to stress: catalyzes m5C modification on mitochondrial RNAs, such as a mRNAs and lncRNAs, with a preference for the termini of light-strand lncRNAs, promoting their degradation and cytosolic release. Modified light-strand lncRNAs are then recognized by C1QBP reader and recruited to the mitochondrial degradosome complex, which promotes their degradation. The polypeptide is 5-cytosine rRNA methyltransferase NSUN4 (Homo sapiens (Human)).